Reading from the N-terminus, the 343-residue chain is MTIDDRKIKILQAIINDYIHTGDPVGSRTIAKKYNLGVGSATIRNEMADLEDMGYLEQPHASSGRVPSNKGYRLYVDSLMENQLLTPEENLKIKQYIIDTAMLEVDKIVRQTSSLLSELTNLTCVIQTPSVNKSFIKSLQLMKVDSTTLVSVIITDAGVMKNHIIRVNSTPTIEELNKINAVINRRLVNLCIEQINLQVINQLKEDLQGYDELFNALLTPLYETLKNAADSPDLIMEGATNIFNYPEYNDIEKAKEMLSLLNDKESLRDLLKTNKDITIRIGEENYKPQAKECSIIAAEYSFGNRPIGTIGLIGPKRIDYSKVISIMAEIVKELNNILNNQSK.

The protein belongs to the HrcA family.

Functionally, negative regulator of class I heat shock genes (grpE-dnaK-dnaJ and groELS operons). Prevents heat-shock induction of these operons. This chain is Heat-inducible transcription repressor HrcA, found in Clostridium botulinum (strain Eklund 17B / Type B).